The primary structure comprises 341 residues: Processive diacylglycerol beta-glycosyltransferase (341 aa).

Belongs to the glycosyltransferase 2 family. Requires Mg(2+) as cofactor.

Its subcellular location is the cell membrane. The enzyme catalyses a 1,2-diacyl-sn-glycerol + UDP-alpha-D-glucose = a 1,2-diacyl-3-O-(beta-D-glucopyranosyl)-sn-glycerol + UDP + H(+). The catalysed reaction is a 1,2-diacyl-sn-glycerol + UDP-alpha-D-galactose = a 1,2-diacyl-3-O-(beta-D-galactosyl)-sn-glycerol + UDP + H(+). It carries out the reaction a 1,2-diacyl-3-O-(beta-D-galactosyl)-sn-glycerol + UDP-alpha-D-glucose = a 1,2-diacyl-3-O-[beta-D-glucopyranosyl-(1-&gt;6)-beta-D-galactopyranosyl]-sn-glycerol + UDP + H(+). It catalyses the reaction a 1,2-diacyl-3-O-(beta-D-galactosyl)-sn-glycerol + UDP-alpha-D-galactose = a 1,2-diacyl-3-O-[beta-D-galactosyl-(1-&gt;6)-beta-D-galactosyl]-sn-glycerol + UDP + H(+). Activated by the negatively charged lipid phosphatidylglycerol (PG). Its function is as follows. Processive glycosyltransferase involved in the biosynthesis of both the non-bilayer-prone beta-monoglycosyldiacylglycerol and the bilayer-forming membrane lipid glucosyl-galactosyldiacylglycerol and digalactosyl-diacylglycerol. These components contribute to regulate the properties and stability of the membrane. Catalyzes sequentially the transfers of glucosyl or galactosyl residues from UDP-Glc or UDP-Gal to diacylglycerol (DAG) acceptor to form the corresponding beta-glycosyl-DAG (3-O-(beta-D-glycopyranosyl)-1,2-diacyl-sn-glycerol). Then, only beta-galactosyl-DAG (3-O-(beta-D-galactopyranosyl)-1,2-diacyl-sn-glycerol) can act as acceptor to give the beta-glycosyl-beta-galactosyl-DAG product (3-O-(beta-D-glycopyranosyl-(1-&gt;6)-D-galactopyranosyl)-1,2-diacyl-sn-glycerol). It can also use alpha-Gal-beta-Gal-DAG, ceramide (Cer) and beta-Gal-Cer as sugar acceptors. The enzyme is supposed to be mainly a galactosyltransferase, with higher glycosyltransferase activity for the addition of the second glycosyl on beta-Gal-DAG as acceptor. The main glycolipid produced in vivo is beta-Glc-beta-Gal-DAG with a beta-1,6 linkage. This chain is Processive diacylglycerol beta-glycosyltransferase, found in Mycoplasma pneumoniae (strain ATCC 29342 / M129 / Subtype 1) (Mycoplasmoides pneumoniae).